The following is a 447-amino-acid chain: Mannose/glucose-specific lectin (447 aa).

Jacalin-type lectin domains are found at residues 5–148 (MISV…FVKP), 153–294 (TISF…YVKP), and 300–443 (SISI…FVKP).

It belongs to the jacalin lectin family. In terms of tissue distribution, expressed in seeds (at protein level).

Its activity is regulated as follows. Hemagglutinating activity is slightly inhibited by alpha-methyl-D-mannopyranoside. Functionally, D-mannose/D-glucose-binding lectin that also binds derivatives N-acetyl-D-glucosamine and alpha-methyl-D-mannopyranoside. Does not bind D-galactose, L-Rhamnose, D-fructose, lactose or glycoproteins fetiun and mucin. Shows agglutinating activity towards human and rabbit erythrocytes. Also displays antimicrobial activity against L.infantum. This Parkia pendula (Inga pendula) protein is Mannose/glucose-specific lectin.